A 316-amino-acid chain; its full sequence is Transaldolase (316 aa).

K132 serves as the catalytic Schiff-base intermediate with substrate.

The protein belongs to the transaldolase family. Type 1 subfamily. As to quaternary structure, homodimer.

Its subcellular location is the cytoplasm. It carries out the reaction D-sedoheptulose 7-phosphate + D-glyceraldehyde 3-phosphate = D-erythrose 4-phosphate + beta-D-fructose 6-phosphate. Its pathway is carbohydrate degradation; pentose phosphate pathway; D-glyceraldehyde 3-phosphate and beta-D-fructose 6-phosphate from D-ribose 5-phosphate and D-xylulose 5-phosphate (non-oxidative stage): step 2/3. Functionally, transaldolase is important for the balance of metabolites in the pentose-phosphate pathway. In Vibrio campbellii (strain ATCC BAA-1116), this protein is Transaldolase.